A 224-amino-acid chain; its full sequence is CRIB domain-containing protein RIC1 (224 aa).

Positions 29–42 constitute a CRIB domain; it reads IGFPTDVKHVAHIG. A disordered region spans residues 38–224; that stretch reads VAHIGSDGPT…SVDTTCNDII (187 aa). Composition is skewed to polar residues over residues 69–84, 114–132, 144–155, and 215–224; these read SRGN…TNQR, PNHN…ASSD, AHGSTDSSNDQE, and SVDTTCNDII.

As to quaternary structure, interacts with ARAC11/ROP1. Expressed in columella cells from the root tip and epidermal cells at the base of lateral roots, leaves, stems, flowers, anthers, pollen and siliques.

It is found in the cytoplasm. The protein localises to the cytoskeleton. Its function is as follows. Functions as a downstream effector of Rho-related GTP binding proteins of the 'Rho of Plants' (ROPs) family. Participates in the propagation of ROP GTPase signals in specific cellular responses. Required for cortical microtubule organization. Promotes microtubule bundling and formation of well-ordered microtubule arrays in the neck region of pavement cells. This restricts cell lateral expansion to generate the narrow neck morphology of pavement cells. Its function is inhibited when it interacts with activated ARAC4/ROP2. Represses ARAC4/ROP2 activation and antagonizes the RIC4-actin pathway that promotes the assembly of cortical actin microfilaments. Acts as a downstream effector of ARAC3/ROP6 which functions in a signaling pathway that negatively regulates clathrin-mediated endocytosis and internalization of PIN1 and PIN2. Required for the asymmetric auxin distribution during root gravitropism and vascular patterning. Positively regulates auxin responses, but negatively regulates ABA responses during lateral root development and primary root elongation. In Arabidopsis thaliana (Mouse-ear cress), this protein is CRIB domain-containing protein RIC1 (RIC1).